A 261-amino-acid polypeptide reads, in one-letter code: Sulfur carrier protein FdhD (261 aa).

Catalysis depends on Cys105, which acts as the Cysteine persulfide intermediate. 245–250 (FIRGDR) contacts Mo-bis(molybdopterin guanine dinucleotide).

It belongs to the FdhD family.

It localises to the cytoplasm. Functionally, required for formate dehydrogenase (FDH) activity. Acts as a sulfur carrier protein that transfers sulfur from IscS to the molybdenum cofactor prior to its insertion into FDH. This chain is Sulfur carrier protein FdhD, found in Listeria innocua serovar 6a (strain ATCC BAA-680 / CLIP 11262).